A 350-amino-acid chain; its full sequence is uncharacterized protein (350 aa).

A disordered region spans residues R330 to F350. Residues H331–Y341 are compositionally biased toward basic and acidic residues.

This is an uncharacterized protein from Mycobacterium tuberculosis.